A 91-amino-acid chain; its full sequence is Acylphosphatase (91 aa).

Residues 3-91 (CLKAVVKGKV…GNYGDFHIKY (89 aa)) form the Acylphosphatase-like domain. Catalysis depends on residues Arg18 and Asn36.

Belongs to the acylphosphatase family.

The enzyme catalyses an acyl phosphate + H2O = a carboxylate + phosphate + H(+). The sequence is that of Acylphosphatase (acyP) from Dehalococcoides mccartyi (strain ATCC BAA-2266 / KCTC 15142 / 195) (Dehalococcoides ethenogenes (strain 195)).